Here is a 70-residue protein sequence, read N- to C-terminus: Conotoxin Vc6.10 (70 aa).

Positions 1-19 (MEKLTILLLVAAVLTSTQA) are cleaved as a signal peptide. Residues 20 to 40 (LIQGGADERQKAKINFLSRSD) constitute a propeptide that is removed on maturation. Cystine bridges form between cysteine 43–cysteine 57, cysteine 50–cysteine 62, and cysteine 56–cysteine 69.

The protein belongs to the conotoxin O2 superfamily. In terms of tissue distribution, expressed by the venom duct.

It localises to the secreted. Functionally, inhibits voltage-gated ion channels. The polypeptide is Conotoxin Vc6.10 (Conus victoriae (Queen Victoria cone)).